A 326-amino-acid polypeptide reads, in one-letter code: DNA-directed RNA polymerase subunit alpha (326 aa).

The interval 1–231 (MQTNLLKPKI…DQLVVFAALE (231 aa)) is alpha N-terminal domain (alpha-NTD). Residues 247–326 (VDPMLMRPVD…ESWPPANLEK (80 aa)) are alpha C-terminal domain (alpha-CTD).

The protein belongs to the RNA polymerase alpha chain family. In terms of assembly, homodimer. The RNAP catalytic core consists of 2 alpha, 1 beta, 1 beta' and 1 omega subunit. When a sigma factor is associated with the core the holoenzyme is formed, which can initiate transcription.

It carries out the reaction RNA(n) + a ribonucleoside 5'-triphosphate = RNA(n+1) + diphosphate. Functionally, DNA-dependent RNA polymerase catalyzes the transcription of DNA into RNA using the four ribonucleoside triphosphates as substrates. This chain is DNA-directed RNA polymerase subunit alpha, found in Polynucleobacter necessarius subsp. necessarius (strain STIR1).